Consider the following 99-residue polypeptide: uncharacterized protein (99 aa).

The N-terminal stretch at 1–19 is a signal peptide; that stretch reads MLGMIRWVVEGTLVAMLLS. The tract at residues 71–99 is disordered; sequence DGFGRINDSGPKRRGRDQSQYSSRFVELD.

It localises to the cytoplasm. This is an uncharacterized protein from Saccharomyces cerevisiae (strain ATCC 204508 / S288c) (Baker's yeast).